Here is a 1058-residue protein sequence, read N- to C-terminus: Ubiquitin-like modifier-activating enzyme 1 Y (1058 aa).

The disordered stretch occupies residues 1–22 (MSSSVLSKKRKVSGPDSSLDSS). ATP contacts are provided by residues Ala-477, Asp-503, Arg-514, Lys-527, and 575–576 (DN). Catalysis depends on Cys-631, which acts as the Glycyl thioester intermediate.

This sequence belongs to the ubiquitin-activating E1 family. In terms of assembly, monomer. In terms of tissue distribution, expressed in testis in A spermatogonia and spermatids but not (or at very low levels) in pachytene spermatocytes. Also expressed in Y-bearing ovaries and at very low levels in adrenal gland.

The enzyme catalyses ATP + ubiquitin + [E1 ubiquitin-activating enzyme]-L-cysteine = AMP + diphosphate + S-ubiquitinyl-[E1 ubiquitin-activating enzyme]-L-cysteine.. It participates in protein modification; protein ubiquitination. Activates ubiquitin by first adenylating its C-terminal glycine residue with ATP, and thereafter linking this residue to the side chain of a cysteine residue in E1, yielding a ubiquitin-E1 thioester and free AMP. The Y chromosome form could be involved in the survival and proliferation of differentiating spermatogonia. The polypeptide is Ubiquitin-like modifier-activating enzyme 1 Y (Uba1y) (Mus musculus (Mouse)).